Consider the following 260-residue polypeptide: Phosphatidylglycerol--prolipoprotein diacylglyceryl transferase (260 aa).

The next 4 helical transmembrane spans lie at 17–37 (VVKW…SWIF), 52–72 (LTAA…LHVI), 85–105 (IFSG…IGLW), and 113–133 (FNLG…QAIG). Arg-134 lines the a 1,2-diacyl-sn-glycero-3-phospho-(1'-sn-glycerol) pocket. A run of 3 helical transmembrane segments spans residues 170 to 190 (APTQ…SLFI), 198 to 218 (GQLF…IGFV), and 227 to 247 (GLEQ…PLFI).

This sequence belongs to the Lgt family.

Its subcellular location is the cell membrane. It catalyses the reaction L-cysteinyl-[prolipoprotein] + a 1,2-diacyl-sn-glycero-3-phospho-(1'-sn-glycerol) = an S-1,2-diacyl-sn-glyceryl-L-cysteinyl-[prolipoprotein] + sn-glycerol 1-phosphate + H(+). The protein operates within protein modification; lipoprotein biosynthesis (diacylglyceryl transfer). Catalyzes the transfer of the diacylglyceryl group from phosphatidylglycerol to the sulfhydryl group of the N-terminal cysteine of a prolipoprotein, the first step in the formation of mature lipoproteins. This chain is Phosphatidylglycerol--prolipoprotein diacylglyceryl transferase, found in Dehalococcoides mccartyi (strain ATCC BAA-2100 / JCM 16839 / KCTC 5957 / BAV1).